The primary structure comprises 133 residues: uncharacterized protein (133 aa).

Residues 91–113 (LFATALISCIPSSFSALSFLATL) form a helical membrane-spanning segment.

Its subcellular location is the membrane. This is an uncharacterized protein from Saccharomyces cerevisiae (strain ATCC 204508 / S288c) (Baker's yeast).